Reading from the N-terminus, the 366-residue chain is Chorismate synthase (366 aa).

The NADP(+) site is built by Arg47 and Arg53. FMN is bound by residues 124-126 (RSS), Gly286, 301-305 (KPTAT), and Arg327.

It belongs to the chorismate synthase family. In terms of assembly, homotetramer. FMNH2 is required as a cofactor.

The enzyme catalyses 5-O-(1-carboxyvinyl)-3-phosphoshikimate = chorismate + phosphate. It functions in the pathway metabolic intermediate biosynthesis; chorismate biosynthesis; chorismate from D-erythrose 4-phosphate and phosphoenolpyruvate: step 7/7. Catalyzes the anti-1,4-elimination of the C-3 phosphate and the C-6 proR hydrogen from 5-enolpyruvylshikimate-3-phosphate (EPSP) to yield chorismate, which is the branch point compound that serves as the starting substrate for the three terminal pathways of aromatic amino acid biosynthesis. This reaction introduces a second double bond into the aromatic ring system. This chain is Chorismate synthase, found in Microcystis aeruginosa (strain NIES-843 / IAM M-2473).